Consider the following 296-residue polypeptide: Transmembrane O-methyltransferase (296 aa).

The helical transmembrane segment at 36–56 (VGTMSPAIALAFLPLVVTLLV) threads the bilayer. Residues Glu-142, 144 to 145 (GT), Ser-150, Glu-168, and Ser-198 contribute to the S-adenosyl-L-methionine site.

Belongs to the class I-like SAM-binding methyltransferase superfamily. Cation-dependent O-methyltransferase family. In terms of assembly, interacts with LHFPL5, PCDH15, TMC1, TMC2 and TMIE. Interacts directly with TMC1. The interaction of TOMT with TMC1 and TMC2 is required for the transportation of TMC1/2 into the stereocilia of hair cells.

The protein localises to the membrane. It is found in the cytoplasm. The protein resides in the endoplasmic reticulum. The enzyme catalyses a catechol + S-adenosyl-L-methionine = a guaiacol + S-adenosyl-L-homocysteine + H(+). Functionally, catalyzes the O-methylation, and thereby the inactivation, of catecholamine neurotransmitters and catechol hormones. Required for auditory function. Component of the cochlear hair cell's mechanotransduction (MET) machinery. Involved in the assembly of the asymmetric tip-link MET complex. Required for transportation of TMC1 and TMC2 proteins into the mechanically sensitive stereocilia of the hair cells. The function in MET is independent of the enzymatic activity. This Macaca mulatta (Rhesus macaque) protein is Transmembrane O-methyltransferase.